A 319-amino-acid chain; its full sequence is Homoserine O-acetyltransferase (319 aa).

C142 acts as the Acyl-thioester intermediate in catalysis. 2 residues coordinate substrate: K163 and S192. The active-site Proton acceptor is H235. E237 is a catalytic residue. R249 contacts substrate.

The protein belongs to the MetA family.

The protein resides in the cytoplasm. The catalysed reaction is L-homoserine + acetyl-CoA = O-acetyl-L-homoserine + CoA. It functions in the pathway amino-acid biosynthesis; L-methionine biosynthesis via de novo pathway; O-acetyl-L-homoserine from L-homoserine: step 1/1. In terms of biological role, transfers an acetyl group from acetyl-CoA to L-homoserine, forming acetyl-L-homoserine. This Lactococcus lactis subsp. cremoris (strain MG1363) protein is Homoserine O-acetyltransferase.